Reading from the N-terminus, the 326-residue chain is DNA-directed RNA polymerase subunit alpha (326 aa).

Residues 1–230 (MLKIEKQAKA…LHLDPFLEIG (230 aa)) form an alpha N-terminal domain (alpha-NTD) region. The alpha C-terminal domain (alpha-CTD) stretch occupies residues 249–326 (DIQVIDDKSH…YDLEKNGSPE (78 aa)).

Belongs to the RNA polymerase alpha chain family. Homodimer. The RNAP catalytic core consists of 2 alpha, 1 beta, 1 beta' and 1 omega subunit. When a sigma factor is associated with the core the holoenzyme is formed, which can initiate transcription.

It carries out the reaction RNA(n) + a ribonucleoside 5'-triphosphate = RNA(n+1) + diphosphate. Its function is as follows. DNA-dependent RNA polymerase catalyzes the transcription of DNA into RNA using the four ribonucleoside triphosphates as substrates. The sequence is that of DNA-directed RNA polymerase subunit alpha from Fusobacterium nucleatum subsp. nucleatum (strain ATCC 25586 / DSM 15643 / BCRC 10681 / CIP 101130 / JCM 8532 / KCTC 2640 / LMG 13131 / VPI 4355).